Consider the following 1453-residue polypeptide: Collagen alpha-1(I) chain (1453 aa).

A signal peptide spans 1-22 (MFSFVDSRLLLLIAATVLLTRG). Positions 23-151 (EGEEDIQTGS…PPGLGGNFAP (129 aa)) are cleaved as a propeptide — N-terminal propeptide. Residues 31–89 (GSCVQDGLTYNDKDVWKPEPCQICVCDSGNILCDEVICEDTSDCPNAEIPFGECCPICP) enclose the VWFC domain. The interval 98–1203 (PESAGVEGPK…PQEKAHDGGR (1106 aa)) is disordered. The segment covering 106-116 (PKGDTGPRGDR) has biased composition (basic and acidic residues). Residues 131 to 143 (PGLPGPPGPPGPP) show a composition bias toward pro residues. Q152 carries the post-translational modification Pyrrolidone carboxylic acid. The residue at position 160 (K160) is an Allysine. The span at 162–176 (AGVAVPGPMGPAGPR) shows a compositional bias: low complexity. 4-hydroxyproline occurs at positions 179, 182, 185, 194, 197, 200, 215, 230, 236, 245, and 251. The span at 187–206 (PQGFQGPPGEPGEPGASGPM) shows a compositional bias: low complexity. K254 carries the 5-hydroxylysine; alternate modification. An O-linked (Gal...) hydroxylysine; partial glycan is attached at K254. A compositionally biased stretch (low complexity) spans 265–284 (AKGQPGPAGPKGEPGSPGEN). 4-hydroxyproline is present on residues P269, P278, P281, P287, P296, P302, P317, P323, P332, and P335. Residues 307-319 (PAGARGNDGAPGA) show a composition bias toward low complexity. A compositionally biased stretch (pro residues) spans 320 to 334 (AGPPGPTGPAGPPGF). Residues 350 to 361 (RGSEGPQGSRGE) show a composition bias toward low complexity. 4-hydroxyproline occurs at positions 362, 365, 377, 383, 392, 398, 401, and 416. Residues 368–418 (AGAAGPAGNPGADGQPGAKGATGAPGIAGAPGFPGARGPSGPQGPSGAPGP) are compositionally biased toward low complexity. K419 carries the post-translational modification 5-hydroxylysine. 4-hydroxyproline occurs at positions 425, 428, 440, 449, 464, 470, 479, and 485. Residues 463–482 (EPGPAGLPGPAGERGAPGSR) are compositionally biased toward low complexity. K494 is subject to 5-hydroxylysine. 4-hydroxyproline occurs at positions 497, 503, 512, 518, 524, 533, 536, 545, 554, 560, 572, 581, 584, 590, 593, 611, 629, 635, 641, 647, 653, 659, 671, 680, 692, 704, 707, 713, 719, 728, and 737. Over residues 527–581 (KGLTGSPGSPGPDGKTGPPGPAGQDGRPGPAGPPGARGQAGVMGFPGPKGAAGEP) the composition is skewed to low complexity. Over residues 623 to 664 (QGPAGAPGFQGLPGPAGPPGEAGKPGEQGVPGNAGAPGPAGA) the composition is skewed to low complexity. Residues 685–722 (PRGANGAPGNDGAKGDAGAPGAPGNEGPPGLEGMPGER) show a composition bias toward low complexity. K740 bears the 5-hydroxylysine mark. 4-hydroxyproline is present on residues P746, P761, P767, P776, P788, P794, P797, P806, P812, P830, P839, and P848. The segment covering 800–827 (AGFAGPPGADGQPGAKGETGDAGAKGDA) has biased composition (low complexity). The span at 835–883 (PTGAPGPAGZVGAPGPKGARGSAGPPGATGFPGAAGRVGPPGPSGNIGL) shows a compositional bias: low complexity. Position 851 is a 5-hydroxylysine (K851). 4-hydroxyproline occurs at positions 860 and 866. P874 is modified (3-hydroxyproline). 18 positions are modified to 4-hydroxyproline: P875, P884, P887, P908, P911, P917, P920, P926, P935, P953, P962, P965, P971, P986, P992, P998, P1007, and P1013. Low complexity predominate over residues 890-908 (AGKZGSKGPRGETGPAGRP). The span at 910 to 920 (EPGPAGPPGPP) shows a compositional bias: pro residues. A compositionally biased stretch (pro residues) spans 985–995 (PPGPMGPPGLA). The segment covering 997 to 1021 (PPGEAGREGAPGAEGAPGRDGAAGP) has biased composition (low complexity). K1022 is modified (5-hydroxylysine; partial). Residues 1031–1046 (AGPPGAPGAPGAPGPV) are compositionally biased toward pro residues. P1034, P1037, P1040, and P1067 each carry 4-hydroxyproline. Over residues 1070–1081 (AGARGPAGPQGP) the composition is skewed to low complexity. A compositionally biased stretch (basic and acidic residues) spans 1082-1096 (RGDKGETGEQGDRGM). The residue at position 1085 (K1085) is a 5-hydroxylysine; partial. K1097 is modified (5-hydroxylysine; alternate). The O-linked (Gal...) hydroxylysine; partial glycan is linked to K1097. Residues P1109, P1112, P1115, P1133, and P1148 each carry the 4-hydroxyproline modification. Positions 1115–1139 (PGEQGPSGASGPAGPRGPPGSAGAA) are enriched in low complexity. The residue at position 1153 (P1153) is a 3-hydroxyproline. Position 1154 is a 4-hydroxyproline (P1154). Over residues 1166–1181 (VGPPGPPGPPGPPGPP) the composition is skewed to pro residues. 3-hydroxyproline is present on P1168. The residue at position 1169 (P1169) is a 4-hydroxyproline. P1171 is subject to 3-hydroxyproline. P1172 bears the 4-hydroxyproline mark. P1174 carries the 3-hydroxyproline modification. 4-hydroxyproline is present on residues P1175, P1178, and P1181. K1197 carries the allysine modification. The propeptide at 1208 to 1453 (DDANVMRDRD…GIDIGPVCFL (246 aa)) is C-terminal propeptide. Residues 1218–1453 (LEVDTTLKSL…GIDIGPVCFL (236 aa)) enclose the Fibrillar collagen NC1 domain. 3 disulfide bridges follow: C1248/C1280, C1288/C1451, and C1359/C1404. Residues D1266, N1268, Q1269, C1271, and D1274 each contribute to the Ca(2+) site. N1354 is a glycosylation site (N-linked (GlcNAc...) asparagine).

Belongs to the fibrillar collagen family. In terms of assembly, trimers of one alpha 2(I) and two alpha 1(I) chains. Post-translationally, contains mostly 4-hydroxyproline. Proline residues at the third position of the tripeptide repeating unit (G-X-Y) are 4-hydroxylated in some or all of the chains. Contains 3-hydroxyproline. This modification occurs on the first proline residue in the sequence motif Gly-Pro-Hyp, where Hyp is 4-hydroxyproline. In terms of processing, lysine residues at the third position of the tripeptide repeating unit (G-X-Y) are 5-hydroxylated in some or all of the chains. Post-translationally, O-glycosylated on hydroxylated lysine residues. The O-linked glycan consists of a Glc-Gal disaccharide. As to expression, forms the fibrils of tendon, ligaments and bones. In bones the fibrils are mineralized with calcium hydroxyapatite.

The protein localises to the secreted. It localises to the extracellular space. Its subcellular location is the extracellular matrix. In terms of biological role, type I collagen is a member of group I collagen (fibrillar forming collagen). This Gallus gallus (Chicken) protein is Collagen alpha-1(I) chain (COL1A1).